Reading from the N-terminus, the 229-residue chain is Trehalose-6-phosphate phosphatase-related protein (229 aa).

Asp-5 acts as the Nucleophile in catalysis. Mg(2+) is bound by residues Asp-5, Asp-7, and Asp-177. 5-7 provides a ligand contact to substrate; it reads DYD.

Belongs to the trehalose phosphatase family. The cofactor is Mg(2+).

It catalyses the reaction alpha,alpha-trehalose 6-phosphate + H2O = alpha,alpha-trehalose + phosphate. It participates in glycan biosynthesis; trehalose biosynthesis. Its function is as follows. Removes the phosphate from trehalose 6-phosphate (Tre6P) to produce free trehalose. Also catalyzes the dephosphorylation of para-nitrophenyl phosphate (pNPP), but with lesser efficiency (in vitro). In Thermoplasma acidophilum (strain ATCC 25905 / DSM 1728 / JCM 9062 / NBRC 15155 / AMRC-C165), this protein is Trehalose-6-phosphate phosphatase-related protein.